Consider the following 312-residue polypeptide: Serine/threonine-protein phosphatase CPPED1 (312 aa).

The residue at position 2 (S2) is a Phosphoserine. The tract at residues K47–N250 is catalytic. 3 residues coordinate a divalent metal cation: D90, N127, and H246. S293 carries the post-translational modification Phosphoserine.

It belongs to the metallophosphoesterase superfamily. CPPED1 family. A divalent metal cation is required as a cofactor.

It localises to the cytoplasm. It carries out the reaction O-phospho-L-seryl-[protein] + H2O = L-seryl-[protein] + phosphate. It catalyses the reaction O-phospho-L-threonyl-[protein] + H2O = L-threonyl-[protein] + phosphate. Protein phosphatase that dephosphorylates AKT family kinase specifically at 'Ser-473', blocking cell cycle progression and promoting cell apoptosis. May play an inhibitory role in glucose uptake by adipocytes. The polypeptide is Serine/threonine-protein phosphatase CPPED1 (Cpped1) (Mus musculus (Mouse)).